A 637-amino-acid chain; its full sequence is Anthranilate synthase, phenazine specific (637 aa).

An anthranilate synthase component I region spans residues 1-434 (MSQAAARLME…QRQQTQSDFS (434 aa)). Residues 437–628 (QVLIVDAEDT…LRHALIHTPV (192 aa)) form the Glutamine amidotransferase type-1 domain. Active-site for GATase activity residues include cysteine 517, histidine 602, and glutamate 604.

It carries out the reaction chorismate + L-glutamine = anthranilate + pyruvate + L-glutamate + H(+). Its pathway is antibiotic biosynthesis; phenazine biosynthesis. Involved in the biosynthesis of the antibiotic, phenazine, a nitrogen-containing heterocyclic molecule having important roles in virulence, competition and biological control. In Pseudomonas fluorescens, this protein is Anthranilate synthase, phenazine specific (phzE).